The sequence spans 866 residues: MVSNGHFAYAEDDPVASYEHGVQVVDEDKEFNPNLSKYLAYEGVTPAGFNYHLISVFGSQSTGKSTLLNYLFGTHFSVMSETERRQTTKGIWMSKNKRQDCERENSLPHLQNNRMADNILVMDVEGTDGRERGEDQDFERKSALFALATSEVLIVNIWEHQVGLYQGANMGLLKTVFEVNMQLFLKDKKSTPRSLLFFVIRDFLGTTPLQNLQNTLMQDLQRIWTSLSKPPGLENSTIEDYFDFEFAALPHKNFQTDKFVAEVKKLSMRFREGHRDPSKGNKTEGGIFLSEYHRRIPADGFAVYAEGIWDQIVNNKDLDLPTQQELLAQFRCDEISREVLVAFDEAVVPFETKQAEAAQSGNPEVFAGLGPAMKNARVKTLSAFETEASRYHKRVFQMKRAELEDKMDTRLKVLFSGQLTAAHKSGIAQFSDAVSAAVKAGQKKGASYDFADIVNKEKRIALERFEDDAKATVIEGACWSNYTQELALYQKDLEKISAQLRKDEMRRLATRVERWVRSRLGESVGLEFNALGSGRGGSGAPETGDKPSEDTIWDRIWSIFVATVLEAEQRFTERASSFDASLEEVDVGLWRLRRKAWGVLRSKIDEEMMEGNLLLKLRENFEDKFRYDSAGVPRIWRPTDDIEGLYTKARESTLTLIPLLSRFRLQETNATPQLDRWVGYTPSAATPADEEDLVPIGGVDDDGKSLEEEMTMLSETKRQDLTVRFKKAADGVYVEAKRSAIGGMTQIPVYFYILLLALGWNEIIAVLRNPVYFFMLFLCSVAAYIIYQLNLWGPMVKMAEAASHQAVEEGKKRLRDLLEPSDIGHHGMKYKNGTEQYEMSHVRSGRNATKINERDDDDEVEGEETW.

The Cytoplasmic segment spans residues 1–746 (MVSNGHFAYA…KRSAIGGMTQ (746 aa)). A GB1/RHD3-type G domain is found at 48 to 305 (GFNYHLISVF…IPADGFAVYA (258 aa)). Residue 58–65 (GSQSTGKS) participates in GTP binding. Residues 480-506 (SNYTQELALYQKDLEKISAQLRKDEMR) are a coiled coil. The helical transmembrane segment at 747-767 (IPVYFYILLLALGWNEIIAVL) threads the bilayer. Residues 768 to 770 (RNP) are Lumenal-facing. Residues 771–791 (VYFFMLFLCSVAAYIIYQLNL) form a helical membrane-spanning segment. The Cytoplasmic segment spans residues 792–866 (WGPMVKMAEA…DDEVEGEETW (75 aa)). Residues 840–866 (SHVRSGRNATKINERDDDDEVEGEETW) are disordered. Residues 854–866 (RDDDDEVEGEETW) are compositionally biased toward acidic residues.

Belongs to the TRAFAC class dynamin-like GTPase superfamily. GB1/RHD3 GTPase family. RHD3 subfamily.

It is found in the endoplasmic reticulum membrane. Cooperates with the reticulon proteins and tubule-shaping DP1 family proteins to generate and maintain the structure of the tubular endoplasmic reticulum network. Has GTPase activity, which is required for its function in ER organization. In Coccidioides immitis (strain RS) (Valley fever fungus), this protein is Protein SEY1.